Here is a 371-residue protein sequence, read N- to C-terminus: Cytochrome b (371 aa).

The next 4 membrane-spanning stretches (helical) occupy residues 25–45 (FGSM…FLAV), 69–90 (WLMQ…YTHI), 105–125 (WLSG…GYVL), and 170–190 (FFAL…LHIM). 2 residues coordinate heme b: histidine 75 and histidine 89. Heme b contacts are provided by histidine 174 and histidine 188. Histidine 193 provides a ligand contact to a ubiquinone. The next 4 helical transmembrane spans lie at 218–238 (YKDM…VAFF), 280–300 (LGGA…PFTH), 312–332 (IMQF…WAAT), and 339–358 (FTAI…ITNP).

It belongs to the cytochrome b family. The cytochrome bc1 complex contains 3 respiratory subunits (MT-CYB, CYC1 and UQCRFS1), 2 core proteins (UQCRC1 and UQCRC2) and probably 6 low-molecular weight proteins. Heme b serves as cofactor.

Its subcellular location is the mitochondrion inner membrane. Functionally, component of the ubiquinol-cytochrome c reductase complex (complex III or cytochrome b-c1 complex) that is part of the mitochondrial respiratory chain. The b-c1 complex mediates electron transfer from ubiquinol to cytochrome c. Contributes to the generation of a proton gradient across the mitochondrial membrane that is then used for ATP synthesis. In Eryx colubrinus loveridgei, this protein is Cytochrome b (MT-CYB).